Here is a 1055-residue protein sequence, read N- to C-terminus: RapA guanosine triphosphatase-activating protein 1 (1055 aa).

6 disordered regions span residues 76-100, 256-292, 418-525, 544-570, 603-629, and 943-969; these read LSPQ…EEER, NHQP…SSLT, QQLL…FLGV, THAT…SPPL, TTQL…PPSE, and NNNS…NLPT. Basic and acidic residues predominate over residues 89–100; sequence QHEKITPEEEER. 3 stretches are compositionally biased toward low complexity: residues 262-292, 442-455, and 469-482; these read STPR…SSLT, DFNL…NNNN, and TTTT…NNNN. The segment covering 483-494 has biased composition (polar residues); sequence ISPQHSGTSGSP. Low complexity-rich tracts occupy residues 603–622 and 943–966; these read TTQL…TSQP and NNNS…SDSN. Residues 779 to 1048 enclose the Rap-GAP domain; it reads LIQFEAKNIH…RTRKEFLHSF (270 aa).

The protein localises to the cytoplasm. Its subcellular location is the cell cortex. Mediates the deactivation of rap1 and plays an important role in spatially and temporally regulating cell adhesion and chemotaxis by controlling attachment disassembly in the leading edge through the regulation of myosin II assembly and disassembly. Overexpression leads to defective chemotaxis. The chain is RapA guanosine triphosphatase-activating protein 1 (rapgap1) from Dictyostelium discoideum (Social amoeba).